Consider the following 88-residue polypeptide: Small ribosomal subunit protein bS20 (88 aa).

The interval 1-27 is disordered; it reads MANTASAKKMTRKIAKRTAINRSRRSR.

The protein belongs to the bacterial ribosomal protein bS20 family.

Its function is as follows. Binds directly to 16S ribosomal RNA. This Methylobacterium radiotolerans (strain ATCC 27329 / DSM 1819 / JCM 2831 / NBRC 15690 / NCIMB 10815 / 0-1) protein is Small ribosomal subunit protein bS20.